The following is a 273-amino-acid chain: Ribosomal RNA small subunit methyltransferase A (273 aa).

Asn18, Leu20, Gly45, Glu66, Asp91, and Asn113 together coordinate S-adenosyl-L-methionine.

The protein belongs to the class I-like SAM-binding methyltransferase superfamily. rRNA adenine N(6)-methyltransferase family. RsmA subfamily.

It is found in the cytoplasm. The catalysed reaction is adenosine(1518)/adenosine(1519) in 16S rRNA + 4 S-adenosyl-L-methionine = N(6)-dimethyladenosine(1518)/N(6)-dimethyladenosine(1519) in 16S rRNA + 4 S-adenosyl-L-homocysteine + 4 H(+). Functionally, specifically dimethylates two adjacent adenosines (A1518 and A1519) in the loop of a conserved hairpin near the 3'-end of 16S rRNA in the 30S particle. May play a critical role in biogenesis of 30S subunits. This is Ribosomal RNA small subunit methyltransferase A from Escherichia coli O81 (strain ED1a).